Consider the following 817-residue polypeptide: MEEMEEELKCPVCGSFYREPIILPCSHNLCQACARNILVQTPESESPQSRRASGSGVSDYDYLDLDKMSLYSEADSGYGSYGGFASAPTTPCQKSPNGVRVFPPAMPPPPTHLSPALAPVPRNSCITCPQCHRSLILDDRGLRGFPKNRVLEGVIDRYQQSKAAALKCQLCEKAPKEATVMCEQCDVFYCDPCRLRCHPPRGPLAKHRLVPPAQGRVSRRLSPRKVSTCTDHELENHSMYCVQCKMPVCYQCLEEGKHSSHEVKALGAMWKLHKSQLSQALNGLSDRAKEAKEFLVQLRTMVQQIQENSVEFEACLVAQCDALIDALNRRKAQLLARVNKEHEHKLKVVRDQISHCTVKLRQTTGLMEYCLEVIKENDPSGFLQISDALIRRVHLTEDQWGKGTLTPRMTTDFDLSLDNSPLLQSIHQLDFVQVKASSPVPATPILQLEECCTHNNSATLSWKQPPLSTVAADGYILELDDGSGGQFREVYVGKETMCTVDGLHFNSTYNARVKAFNKTGVSPYSKTLVLQTSEAAGAHETKPMKDTDSEEQTLPFPVPSERLPLRRMSPFSSTLNLQPSFPGRSYFDFRSSPHQLSLHSSLQSLNAPGCNFETQSASYSQLVDIKKLLAVAWFAFDPGSAHSDIIFSNDNLTVTCSSYDDRVVLGKTGFSKGVHYWELTIDRYDNHPDPAFGVARIDVMKDMMLGKDDKAWAMYVDNNRSWFMHNNSHTNRTEGGITKGATIGVLLDLNRKTLTFFVNNEQQGPIAFENVEGLFFPAVSLNRNVQVSLWAPGLRACSGCYFKVCPGAVKSPQAPAP.

The RING-type zinc-finger motif lies at 10–50 (CPVCGSFYREPIILPCSHNLCQACARNILVQTPESESPQSR). At T41 the chain carries Phosphothreonine. Phosphoserine is present on residues S44, S46, S49, and S53. 2 consecutive B box-type zinc fingers follow at residues 163 to 212 (AAAL…LVPP) and 224 to 266 (RKVS…VKAL). Zn(2+) contacts are provided by C168, C171, C193, H198, C229, H232, C252, and H258. The stretch at 273-340 (HKSQLSQALN…KAQLLARVNK (68 aa)) forms a coiled coil. The COS domain occupies 374-432 (IKENDPSGFLQISDALIRRVHLTEDQWGKGTLTPRMTTDFDLSLDNSPLLQSIHQLDFV). A Fibronectin type-III domain is found at 440-535 (VPATPILQLE…KTLVLQTSEA (96 aa)). The segment at 535–557 (AAGAHETKPMKDTDSEEQTLPFP) is disordered. The segment covering 537–547 (GAHETKPMKDT) has biased composition (basic and acidic residues). Residues 613 to 794 (ETQSASYSQL…VQVSLWAPGL (182 aa)) enclose the B30.2/SPRY domain.

This sequence belongs to the TRIM/RBCC family. In terms of assembly, interacts with SNAP25. Post-translationally, auto-ubiquitinated. As to expression, brain. Expression is higher in the cerebral cortex and hippocampus (at protein level). Its expression is mainly confined to the central nervous system. The developing neocortex, the dorsal thalamus, the midbrain, the basal area of the hindbrain and spinal cord show high level of expression during embryogenesis. In adult brain, it is detected in the Purkinje cells of the cerebellum, in the hippocampus, and in the cortex.

The protein localises to the cytoplasm. The protein resides in the cell projection. It is found in the dendrite. It localises to the cytoplasmic vesicle. Its subcellular location is the secretory vesicle. The protein localises to the synaptic vesicle. The protein resides in the synapse. It is found in the cytoskeleton. The enzyme catalyses S-ubiquitinyl-[E2 ubiquitin-conjugating enzyme]-L-cysteine + [acceptor protein]-L-lysine = [E2 ubiquitin-conjugating enzyme]-L-cysteine + N(6)-ubiquitinyl-[acceptor protein]-L-lysine.. The protein operates within protein modification; protein ubiquitination. In terms of biological role, E3 ubiquitin-protein ligase which ubiquitinates itself in cooperation with an E2 enzyme UBE2D2/UBC4 and serves as a targeting signal for proteasomal degradation. May play a role in regulation of neuronal functions. May act as a regulator of synaptic vesicle exocytosis by controlling the availability of SNAP25 for the SNARE complex formation. The polypeptide is E3 ubiquitin-protein ligase TRIM9 (Trim9) (Mus musculus (Mouse)).